Consider the following 101-residue polypeptide: uncharacterized protein (101 aa).

A helical transmembrane segment spans residues 68–90; the sequence is LAFAFCGRANTFISCFISFASLI.

Its subcellular location is the membrane. This is an uncharacterized protein from Saccharomyces cerevisiae (strain ATCC 204508 / S288c) (Baker's yeast).